Here is a 295-residue protein sequence, read N- to C-terminus: ATP synthase gamma chain (295 aa).

Belongs to the ATPase gamma chain family. As to quaternary structure, F-type ATPases have 2 components, CF(1) - the catalytic core - and CF(0) - the membrane proton channel. CF(1) has five subunits: alpha(3), beta(3), gamma(1), delta(1), epsilon(1). CF(0) has three main subunits: a, b and c.

Its subcellular location is the cell inner membrane. Functionally, produces ATP from ADP in the presence of a proton gradient across the membrane. The gamma chain is believed to be important in regulating ATPase activity and the flow of protons through the CF(0) complex. This chain is ATP synthase gamma chain, found in Aliarcobacter butzleri (strain RM4018) (Arcobacter butzleri).